Reading from the N-terminus, the 138-residue chain is Putative pre-16S rRNA nuclease (138 aa).

Belongs to the YqgF nuclease family.

Its subcellular location is the cytoplasm. Could be a nuclease involved in processing of the 5'-end of pre-16S rRNA. This Escherichia coli O157:H7 protein is Putative pre-16S rRNA nuclease.